Reading from the N-terminus, the 582-residue chain is Multicopper oxidase LPR1 homolog 1 (582 aa).

The N-terminal stretch at 1 to 20 (MRAKVELAVLLLVLVGVAAG) is a signal peptide. Residues His150, His152, His198, and His200 each contribute to the Cu cation site. N-linked (GlcNAc...) asparagine glycans are attached at residues Asn256, Asn300, and Asn308. The region spanning 285 to 354 (PFLAVARRRY…DVVVDFSQST (70 aa)) is the Plastocyanin-like domain. 3 residues coordinate Cu cation: His467, His470, and His472. A glycan (N-linked (GlcNAc...) asparagine) is linked at Asn504. Cu cation contacts are provided by His563, Cys564, His565, His569, and Met574.

The protein belongs to the multicopper oxidase family. The cofactor is Cu cation. Highly expressed in roots, and at lower levels in basal stems and leaf blades.

The protein localises to the endoplasmic reticulum membrane. In terms of biological role, multicopper oxidase that may play a role in the maintenance of inorganic phosphate homeostasis. This Oryza sativa subsp. japonica (Rice) protein is Multicopper oxidase LPR1 homolog 1.